The following is an 833-amino-acid chain: Leucine--tRNA ligase (833 aa).

The short motif at 41–52 (PYPSGAGLHVGH) is the 'HIGH' region element. Residues 610-614 (KMSKS) carry the 'KMSKS' region motif. Residue Lys-613 coordinates ATP.

Belongs to the class-I aminoacyl-tRNA synthetase family.

Its subcellular location is the cytoplasm. The catalysed reaction is tRNA(Leu) + L-leucine + ATP = L-leucyl-tRNA(Leu) + AMP + diphosphate. This Streptococcus pneumoniae serotype 4 (strain ATCC BAA-334 / TIGR4) protein is Leucine--tRNA ligase.